Reading from the N-terminus, the 206-residue chain is Small ribosomal subunit protein uS4 (206 aa).

One can recognise an S4 RNA-binding domain in the interval 96–156 (CRLDNVVYRM…EKSSNQLRIV (61 aa)).

Belongs to the universal ribosomal protein uS4 family. Part of the 30S ribosomal subunit. Contacts protein S5. The interaction surface between S4 and S5 is involved in control of translational fidelity.

One of the primary rRNA binding proteins, it binds directly to 16S rRNA where it nucleates assembly of the body of the 30S subunit. Its function is as follows. With S5 and S12 plays an important role in translational accuracy. This is Small ribosomal subunit protein uS4 from Pseudomonas putida (strain W619).